Consider the following 233-residue polypeptide: uncharacterized protein (233 aa).

Belongs to the RHS family.

This is an uncharacterized protein from Escherichia coli (strain K12).